Consider the following 415-residue polypeptide: uncharacterized protein (415 aa).

Residues Cys276 and Cys316 each contribute to the [4Fe-4S] cluster site.

As to quaternary structure, homodimer. Requires [4Fe-4S] cluster as cofactor.

This is an uncharacterized protein from Methanocaldococcus jannaschii (strain ATCC 43067 / DSM 2661 / JAL-1 / JCM 10045 / NBRC 100440) (Methanococcus jannaschii).